The sequence spans 179 residues: Cytochrome c-type biogenesis protein CcmE (179 aa).

Topologically, residues 1-8 are cytoplasmic; the sequence is MTPRRKSR. Residues 9–29 form a helical; Signal-anchor for type II membrane protein membrane-spanning segment; sequence MTVILFVLLGISIASALVLYA. The Periplasmic segment spans residues 30–179; sequence LRQNIDLFYT…QKTSMQEGQK (150 aa). Heme-binding residues include histidine 131 and tyrosine 135. Residues 151 to 179 are disordered; sequence MGVADLKGESERDRQEKAYQKTSMQEGQK. Over residues 156–169 the composition is skewed to basic and acidic residues; the sequence is LKGESERDRQEKAY. A compositionally biased stretch (polar residues) spans 170–179; that stretch reads QKTSMQEGQK.

Belongs to the CcmE/CycJ family.

Its subcellular location is the cell inner membrane. Its function is as follows. Heme chaperone required for the biogenesis of c-type cytochromes. Transiently binds heme delivered by CcmC and transfers the heme to apo-cytochromes in a process facilitated by CcmF and CcmH. This is Cytochrome c-type biogenesis protein CcmE from Pasteurella multocida (strain Pm70).